The chain runs to 2215 residues: Unconventional myosin-VIIa (2215 aa).

The Myosin motor domain occupies 65-741 (HGVEDMIRLG…HDMLLEVERD (677 aa)). Position 158–165 (158–165 (GESGAGKT)) interacts with ATP. The segment at 632 to 639 (FVRCIKPN) is actin-binding. IQ domains are found at residues 745–765 (TDRV…SNFL), 768–788 (KSAA…KNYE), 791–811 (RLGF…KQYR), 814–834 (RQRI…KAFR), and 837–857 (LWAV…RLHR). The interval 858-935 (RLRVEYQRRL…LEQMEKARHE (78 aa)) is SAH. The region spanning 1017-1253 (YTRRPLKQPL…PSWLELQATK (237 aa)) is the MyTH4 1 domain. The FERM 1 domain occupies 1258 to 1602 (IMLPVTFMDG…LVVTFLEGLR (345 aa)). T1563 is modified (phosphothreonine). S1569 carries the post-translational modification Phosphoserine. T1571 carries the post-translational modification Phosphothreonine. Residues 1603–1672 (KRSKYVVALQ…PTDCVYVMPT (70 aa)) enclose the SH3 domain. Residues 1747–1896 (HTREPLKQAL…PHLVEVEAIQ (150 aa)) enclose the MyTH4 2 domain. Residues 1902 to 2205 (IFHKVYFPDD…SYISQMLTAM (304 aa)) enclose the FERM 2 domain.

This sequence belongs to the TRAFAC class myosin-kinesin ATPase superfamily. Myosin family. Might homodimerize in a two headed molecule through the formation of a coiled-coil rod. Identified in a complex with USH1C and USH1G. Interacts with MYRIP. Interacts with RPE65. Interacts with CIB2. May interact with CALM. Interacts with WHRN. Interacts with PLEKHB1 (via PH domain). Interacts with PCDH15. Interacts with TWF2. Interacts with USH1G. Interacts with MYH9. Interacts (via MyTH4-FERM domains) with cytoplasmic regions of ADGRV1 and USH2A. Interacts with PDZD7 (via MyTH4-FERM domains). Interacts with CALML4. As to expression, detected in mechanosensory stereocilia of cochlea hair cells (at protein level). Expressed in the retina, cochlea, kidney and liver.

The protein localises to the cytoplasm. It localises to the cell cortex. Its subcellular location is the cytoskeleton. The protein resides in the synapse. Myosins are actin-based motor molecules with ATPase activity. Unconventional myosins serve in intracellular movements. Their highly divergent tails bind to membranous compartments, which are then moved relative to actin filaments. In the retina, plays an important role in the renewal of the outer photoreceptor disks. Plays an important role in the distribution and migration of retinal pigment epithelial (RPE) melanosomes and phagosomes, and in the regulation of opsin transport in retinal photoreceptors. Mediates intracellular transport of RPE65 in the retina pigment epithelium. In the inner ear, plays an important role in differentiation, morphogenesis and organization of cochlear hair cell bundles. Motor protein that is a part of the functional network formed by USH1C, USH1G, CDH23 and MYO7A that mediates mechanotransduction in cochlear hair cells. Required for normal hearing. Involved in hair-cell vesicle trafficking of aminoglycosides, which are known to induce ototoxicity. The sequence is that of Unconventional myosin-VIIa (Myo7a) from Mus musculus (Mouse).